Reading from the N-terminus, the 339-residue chain is Adenylosuccinate synthetase (339 aa).

Residues 12–18 and 42–44 contribute to the GTP site; these read GDEGKGS and GHS. Aspartate 13 acts as the Proton acceptor in catalysis. The Mg(2+) site is built by aspartate 13 and glycine 42. Residues 13–16, 40–43, threonine 127, arginine 141, glutamine 179, threonine 194, and arginine 256 contribute to the IMP site; these read DEGK and NAGH. The Proton donor role is filled by histidine 43. 252-258 contacts substrate; that stretch reads TVTGRRR. Residues arginine 258, 284 to 286, and 324 to 326 contribute to the GTP site; these read MLD and KTG.

Belongs to the adenylosuccinate synthetase family. In terms of assembly, homodimer. Requires Mg(2+) as cofactor.

Its subcellular location is the cytoplasm. It carries out the reaction IMP + L-aspartate + GTP = N(6)-(1,2-dicarboxyethyl)-AMP + GDP + phosphate + 2 H(+). The protein operates within purine metabolism; AMP biosynthesis via de novo pathway; AMP from IMP: step 1/2. In terms of biological role, plays an important role in the de novo pathway of purine nucleotide biosynthesis. Catalyzes the first committed step in the biosynthesis of AMP from IMP. This is Adenylosuccinate synthetase from Pyrococcus horikoshii (strain ATCC 700860 / DSM 12428 / JCM 9974 / NBRC 100139 / OT-3).